The primary structure comprises 727 residues: Elongation factor 2 (727 aa).

The tr-type G domain maps to 19–260 (DQIRNIGICA…MVVTHLPNPV (242 aa)). GTP-binding positions include 28–35 (AHIDHGKT), 94–98 (DTPGH), and 148–151 (NKVD). His603 carries the post-translational modification Diphthamide.

It belongs to the TRAFAC class translation factor GTPase superfamily. Classic translation factor GTPase family. EF-G/EF-2 subfamily.

It localises to the cytoplasm. Functionally, catalyzes the GTP-dependent ribosomal translocation step during translation elongation. During this step, the ribosome changes from the pre-translocational (PRE) to the post-translocational (POST) state as the newly formed A-site-bound peptidyl-tRNA and P-site-bound deacylated tRNA move to the P and E sites, respectively. Catalyzes the coordinated movement of the two tRNA molecules, the mRNA and conformational changes in the ribosome. The polypeptide is Elongation factor 2 (Methanococcus aeolicus (strain ATCC BAA-1280 / DSM 17508 / OCM 812 / Nankai-3)).